Here is a 548-residue protein sequence, read N- to C-terminus: Membrane protein insertase YidC (548 aa).

A helical transmembrane segment spans residues 6–26 (NLLVIALLFVSFMIWQAWEQD). The disordered stretch occupies residues 28–56 (NPQPQTQQTTQTTTTAAGSAADQGVPASG). Positions 29–42 (PQPQTQQTTQTTTT) are enriched in low complexity. The next 4 helical transmembrane spans lie at 350 to 370 (FVGNWGFSIIIITFIVRGIMY), 424 to 444 (FPLIIQMPIFLALYYMLMGSI), 458 to 478 (LSAQDPYYILPILMGVTMFFI), and 499 to 519 (PVIFTVFFLWFPSGLVLYYIV).

It belongs to the OXA1/ALB3/YidC family. Type 1 subfamily. In terms of assembly, interacts with the Sec translocase complex via SecD. Specifically interacts with transmembrane segments of nascent integral membrane proteins during membrane integration.

It is found in the cell inner membrane. Its function is as follows. Required for the insertion and/or proper folding and/or complex formation of integral membrane proteins into the membrane. Involved in integration of membrane proteins that insert both dependently and independently of the Sec translocase complex, as well as at least some lipoproteins. Aids folding of multispanning membrane proteins. This chain is Membrane protein insertase YidC, found in Salmonella dublin (strain CT_02021853).